A 358-amino-acid chain; its full sequence is Alternative oxidase, mitochondrial (358 aa).

A helical membrane pass occupies residues 152-172; that stretch reads LIRYVFLESVAGVPGMVAGML. The Fe cation site is built by Glu159, Glu198, and His201. Residues 218–238 traverse the membrane as a helical segment; that stretch reads MILGAQGVFFNSFFLCYLFSP. Fe cation contacts are provided by Glu249, Glu306, and His309.

The protein belongs to the alternative oxidase family. Requires Fe cation as cofactor.

Its subcellular location is the mitochondrion inner membrane. In terms of biological role, catalyzes cyanide-resistant oxygen consumption. May increase respiration when the cytochrome respiratory pathway is restricted, or in response to low temperatures. The chain is Alternative oxidase, mitochondrial (AOX1) from Monilinia fructicola (Brown rot fungus).